Consider the following 118-residue polypeptide: MSDNKAIQTLQNTKEFNEVIKVKGSLIIFDCFSTWCGPCKVIDPQILKLSQAYSDTYFYKLNVDEVPDVAQKLDIRFVPTFLLFKDGEKVAEVVGAKPKALEDAIRANLGCGATHSSN.

A Thioredoxin domain is found at 1–110 (MSDNKAIQTL…LEDAIRANLG (110 aa)). Cys-36 and Cys-39 are disulfide-bonded.

Belongs to the thioredoxin family.

Its pathway is mycotoxin biosynthesis. Thioredoxin; part of the gene clusters that mediate the biosynthesis of AM-toxins, host-selective toxins (HSTs) causing Alternaria blotch on apple, a worldwide distributed disease. AM-toxins are cyclic depsipeptides containing the 3 residues 2-hydroxy-isovaleric acid (2-HIV), dehydroalanine, L-alanine which are common for all 3 AM-toxins I to III. The fourth precursor is L-alpha-amino-methoxyphenyl-valeric acid (L-Amv) for AM-toxin I, L-alpha-amino-phenyl-valeric acid (L-Apv) for AM-toxin II, and L-alpha-amino-hydroxyphenyl-valeric acid (L-Ahv) for AM-toxin III. AM-toxins have two target sites for affecting susceptible apple cells; they cause invagination of the plasma membrane and electrolyte loss and chloroplast disorganization. The non-ribosomal peptide synthetase AMT1 contains 4 catalytic modules and is responsible for activation of each residue in AM-toxin. The aldo-keto reductase AMT2 catalyzes the conversion of 2-keto-isovaleric acid (2-KIV) to 2-hydroxy-isovaleric acid (2-HIV), one of the precursor residues incorporated by AMT1 during AM-toxin biosynthesis, by reduction of its ketone to an alcohol. The cytochrome P450 monooxygenase AMT3 and the thioesterase AMT4 are also important for AM-toxin production, but their exact function within the AM-toxin biosynthesis are not known yet. Up to 21 proteins (including AMT1 to AMT4) are predicted to be involved in AM-toxin biosynthesis since their expression ishighly up-regulated in AM-toxin-producing cultures. This Alternaria alternata (Alternaria rot fungus) protein is Thioredoxin AMT13.